Here is a 239-residue protein sequence, read N- to C-terminus: tRNA (guanine-N(7)-)-methyltransferase (239 aa).

S-adenosyl-L-methionine is bound by residues Glu-69, Glu-94, Asp-121, and Asp-144. Residue Asp-144 is part of the active site. Substrate is bound at residue Lys-148. Positions 150 to 155 (RHNKRR) are interaction with RNA. Substrate contacts are provided by residues Asp-180 and 217–220 (TKFE).

It belongs to the class I-like SAM-binding methyltransferase superfamily. TrmB family. As to quaternary structure, monomer.

It catalyses the reaction guanosine(46) in tRNA + S-adenosyl-L-methionine = N(7)-methylguanosine(46) in tRNA + S-adenosyl-L-homocysteine. It participates in tRNA modification; N(7)-methylguanine-tRNA biosynthesis. Functionally, catalyzes the formation of N(7)-methylguanine at position 46 (m7G46) in tRNA. This chain is tRNA (guanine-N(7)-)-methyltransferase, found in Shigella boydii serotype 4 (strain Sb227).